Here is a 467-residue protein sequence, read N- to C-terminus: Mothers against decapentaplegic homolog 9 (467 aa).

The region spanning 16-140 is the MH1 domain; it reads PAVKRLLGWK…YRRVETPVLP (125 aa). 4 residues coordinate Zn(2+): C68, C113, C125, and H130. The disordered stretch occupies residues 174–246; sequence NATYPDSFQQ…SETQSGQPVD (73 aa). A compositionally biased stretch (low complexity) spans 205 to 220; it reads SYPHSPGSPSEPESPY. The MH2 domain maps to 273–467; it reads WCSVAYYELN…SPHNPISSVS (195 aa).

Belongs to the dwarfin/SMAD family. In terms of assembly, interaction with the co-SMAD SMAD4. Interacts with PEBP2-alpha subunit. Interacts with RANBP3L. Post-translationally, phosphorylated on serine by BMP (bone morphogenetic proteins) type 1 receptor kinase. In terms of tissue distribution, expressed in heart, brain, placenta, lung, skeletal muscle, prostate, testis, ovary and small intestine. Also expressed in fetal brain, lung and kidney.

It is found in the cytoplasm. The protein resides in the nucleus. Functionally, transcriptional modulator activated by BMP (bone morphogenetic proteins) type 1 receptor kinase. SMAD9 is a receptor-regulated SMAD (R-SMAD). The sequence is that of Mothers against decapentaplegic homolog 9 (SMAD9) from Homo sapiens (Human).